A 247-amino-acid chain; its full sequence is Eukaryotic translation initiation factor 6 (247 aa).

A phosphoserine; by CK1 mark is found at S174 and S175.

Belongs to the eIF-6 family. As to quaternary structure, monomer. Associates with the 60S ribosomal subunit. In terms of processing, phosphorylation at Ser-174 and Ser-175 promotes nuclear export.

The protein localises to the cytoplasm. The protein resides in the nucleus. It localises to the nucleolus. Its function is as follows. Binds to the 60S ribosomal subunit and prevents its association with the 40S ribosomal subunit to form the 80S initiation complex in the cytoplasm. Is also involved in ribosome biogenesis. Associates with pre-60S subunits in the nucleus and is involved in its nuclear export. This Aspergillus oryzae (strain ATCC 42149 / RIB 40) (Yellow koji mold) protein is Eukaryotic translation initiation factor 6 (tif6).